The sequence spans 203 residues: dCTP deaminase (203 aa).

DCTP contacts are provided by residues 105–110 (RSSLGR), Asp123, 131–133 (TLE), Gln152, Tyr166, Lys173, and Gln177. Glu133 (proton donor/acceptor) is an active-site residue. The segment at 164-203 (RPYGVERGSKYQDQDGPQASRIGSDPEFHSDENQAAEHES) is disordered. Over residues 166-176 (YGVERGSKYQD) the composition is skewed to basic and acidic residues. Over residues 187–203 (SDPEFHSDENQAAEHES) the composition is skewed to basic and acidic residues.

The protein belongs to the dCTP deaminase family. As to quaternary structure, homotrimer.

It carries out the reaction dCTP + H2O + H(+) = dUTP + NH4(+). It participates in pyrimidine metabolism; dUMP biosynthesis; dUMP from dCTP (dUTP route): step 1/2. Functionally, catalyzes the deamination of dCTP to dUTP. This chain is dCTP deaminase, found in Halorubrum lacusprofundi (strain ATCC 49239 / DSM 5036 / JCM 8891 / ACAM 34).